We begin with the raw amino-acid sequence, 342 residues long: Cytosolic Fe-S cluster assembly factor NBP35 (342 aa).

A disordered region spans residues 1–45 (MGPSLETPEPVEDVLANPLKQKPQLVAPEPEHCPGPESEQAGTAD). Residues C33, C47, C50, and C56 each contribute to the [4Fe-4S] cluster site. 86 to 93 (GKGGVGKS) serves as a coordination point for ATP. Residues C259 and C262 each coordinate [4Fe-4S] cluster.

It belongs to the Mrp/NBP35 ATP-binding proteins family. NUBP1/NBP35 subfamily. In terms of assembly, heterotetramer of 2 NBP35 and 2 CFD1 chains. [4Fe-4S] cluster is required as a cofactor.

It localises to the cytoplasm. Functionally, component of the cytosolic iron-sulfur (Fe/S) protein assembly (CIA) machinery. Required for maturation of extramitochondrial Fe-S proteins. The NBP35-CFD1 heterotetramer forms a Fe-S scaffold complex, mediating the de novo assembly of an Fe-S cluster and its transfer to target apoproteins. In Chaetomium globosum (strain ATCC 6205 / CBS 148.51 / DSM 1962 / NBRC 6347 / NRRL 1970) (Soil fungus), this protein is Cytosolic Fe-S cluster assembly factor NBP35.